We begin with the raw amino-acid sequence, 41 residues long: Photosystem I reaction center subunit IX (41 aa).

Residues 7–27 (YLSTAPVIALAWMSFTAGLLI) traverse the membrane as a helical segment.

It belongs to the PsaJ family.

Its subcellular location is the plastid. The protein localises to the chloroplast thylakoid membrane. In terms of biological role, may help in the organization of the PsaE and PsaF subunits. This Tupiella akineta (Green alga) protein is Photosystem I reaction center subunit IX.